We begin with the raw amino-acid sequence, 169 residues long: Photosystem I assembly protein Ycf3 (169 aa).

TPR repeat units follow at residues alanine 35 to proline 68, serine 72 to leucine 105, and glycine 120 to asparagine 153.

The protein belongs to the Ycf3 family.

Its subcellular location is the plastid. It localises to the chloroplast thylakoid membrane. Functionally, essential for the assembly of the photosystem I (PSI) complex. May act as a chaperone-like factor to guide the assembly of the PSI subunits. The chain is Photosystem I assembly protein Ycf3 from Huperzia lucidula (Shining clubmoss).